We begin with the raw amino-acid sequence, 774 residues long: MGQKRQRDQKGSGFQSKKRKRGANSSNADDKDDGWDGIVGVEDLNWKEVALPDRLDDAEGFFGLEEIEGVDIVRPEGSGEIRFKAKAGKPKKSILKNKTIPQEDKTFDDEWEGFSDGEAAQETTTTEPTEEPVQTTNEETEVKEKKEPKKKEAKKEVKKDAKNAKKEPKKKDLPSQKDKDIKPGLSFAALQDAEEDDGVDISAWESLGLSPEILNSLSKLKFSSPTAVQKSCIPPILDGHDVVGKASTGSGKTLAFGIPILEYYLEKKRRETKNKDDKKETSPIALILSPTRELAHQLVKHIGEVITHAPGVNARIALLTGGLSVQKQQRLLNGADIVIGTPGRVWEVLSGGQGLISKMKEIKYLVVDEADRLLSEGHFKEAHEILAALDREEINDFPGAEEDESDDEDSKTQRQTLVFSATFHRDLQQKLAGKGKWTGSDLMNKQESMEYLLKKLNFREEKPKFIDVNPVSQMAEGLKEGIVECAAMEKDLYLYTLLLYHPKHRTLVFTNSISAVRRLTQFLQALQLPALALHSSMAQKARLRSVERFSSPTADPSTILVATDVAARGLDIKGIDFVIHYHAPRTADTYVHRSGRTARAGASGKSVIICAPEEMVGVVRLAAKVHANMANGKRLPLESLELDRRIVSRVKQRVTLAARICDANIAKEKVSAEDNWLKNAAEELGVDYDSEEFDERQGRGRGRGRGRQQRERQASSISKAELAGMRAELKQLLSQRVNVGVSERYLTSGRVDIEALLRGEGNASFLGQVDPLGF.

Over residues 1–10 (MGQKRQRDQK) the composition is skewed to basic and acidic residues. 2 disordered regions span residues 1–37 (MGQK…GWDG) and 87–183 (AGKP…DIKP). Positions 106 to 115 (TFDDEWEGFS) are enriched in acidic residues. Residues 118 to 137 (EAAQETTTTEPTEEPVQTTN) are compositionally biased toward low complexity. Basic and acidic residues predominate over residues 140–182 (TEVKEKKEPKKKEAKKEVKKDAKNAKKEPKKKDLPSQKDKDIK). The Q motif signature appears at 202–230 (SAWESLGLSPEILNSLSKLKFSSPTAVQK). A Helicase ATP-binding domain is found at 233–441 (IPPILDGHDV…AGKGKWTGSD (209 aa)). Residue 246 to 253 (ASTGSGKT) participates in ATP binding. The short motif at 368–371 (DEAD) is the DEAD box element. In terms of domain architecture, Helicase C-terminal spans 493–643 (YLYTLLLYHP…RLPLESLELD (151 aa)). Positions 689-718 (DSEEFDERQGRGRGRGRGRQQRERQASSIS) are disordered.

The protein belongs to the DEAD box helicase family. DDX24/MAK5 subfamily.

It is found in the nucleus. The protein localises to the nucleolus. The enzyme catalyses ATP + H2O = ADP + phosphate + H(+). In terms of biological role, ATP-binding RNA helicase involved in the biogenesis of 60S ribosomal subunits and is required for the normal formation of 25S and 5.8S rRNAs. This is ATP-dependent RNA helicase mak5 (mak5) from Aspergillus terreus (strain NIH 2624 / FGSC A1156).